The sequence spans 471 residues: UDP-N-acetylmuramate--L-alanine ligase (471 aa).

Residue G114–T120 participates in ATP binding.

Belongs to the MurCDEF family.

It is found in the cytoplasm. The enzyme catalyses UDP-N-acetyl-alpha-D-muramate + L-alanine + ATP = UDP-N-acetyl-alpha-D-muramoyl-L-alanine + ADP + phosphate + H(+). The protein operates within cell wall biogenesis; peptidoglycan biosynthesis. Cell wall formation. This is UDP-N-acetylmuramate--L-alanine ligase from Chlorobaculum parvum (strain DSM 263 / NCIMB 8327) (Chlorobium vibrioforme subsp. thiosulfatophilum).